Here is a 287-residue protein sequence, read N- to C-terminus: ATP synthase gamma chain (287 aa).

This sequence belongs to the ATPase gamma chain family. As to quaternary structure, F-type ATPases have 2 components, CF(1) - the catalytic core - and CF(0) - the membrane proton channel. CF(1) has five subunits: alpha(3), beta(3), gamma(1), delta(1), epsilon(1). CF(0) has three main subunits: a, b and c.

The protein resides in the cell inner membrane. Produces ATP from ADP in the presence of a proton gradient across the membrane. The gamma chain is believed to be important in regulating ATPase activity and the flow of protons through the CF(0) complex. In Escherichia fergusonii (strain ATCC 35469 / DSM 13698 / CCUG 18766 / IAM 14443 / JCM 21226 / LMG 7866 / NBRC 102419 / NCTC 12128 / CDC 0568-73), this protein is ATP synthase gamma chain.